A 413-amino-acid polypeptide reads, in one-letter code: Multifunctional CCA protein (413 aa).

The ATP site is built by glycine 8 and arginine 11. 2 residues coordinate CTP: glycine 8 and arginine 11. Mg(2+) contacts are provided by aspartate 21 and aspartate 23. Residues arginine 91, arginine 137, and arginine 140 each contribute to the ATP site. 3 residues coordinate CTP: arginine 91, arginine 137, and arginine 140. Residues 228 to 329 (TGKHTLLSLK…VSLFDKGDFW (102 aa)) form the HD domain.

This sequence belongs to the tRNA nucleotidyltransferase/poly(A) polymerase family. Bacterial CCA-adding enzyme type 1 subfamily. As to quaternary structure, monomer. Can also form homodimers and oligomers. Mg(2+) serves as cofactor. The cofactor is Ni(2+).

The enzyme catalyses a tRNA precursor + 2 CTP + ATP = a tRNA with a 3' CCA end + 3 diphosphate. It carries out the reaction a tRNA with a 3' CCA end + 2 CTP + ATP = a tRNA with a 3' CCACCA end + 3 diphosphate. Functionally, catalyzes the addition and repair of the essential 3'-terminal CCA sequence in tRNAs without using a nucleic acid template. Adds these three nucleotides in the order of C, C, and A to the tRNA nucleotide-73, using CTP and ATP as substrates and producing inorganic pyrophosphate. tRNA 3'-terminal CCA addition is required both for tRNA processing and repair. Also involved in tRNA surveillance by mediating tandem CCA addition to generate a CCACCA at the 3' terminus of unstable tRNAs. While stable tRNAs receive only 3'-terminal CCA, unstable tRNAs are marked with CCACCA and rapidly degraded. This chain is Multifunctional CCA protein, found in Shewanella denitrificans (strain OS217 / ATCC BAA-1090 / DSM 15013).